A 483-amino-acid polypeptide reads, in one-letter code: MEEGGGGVRSLVPGGPVLLVLCGLLEASGGGRALPQLSDDIPFRVNWPGTEFSLPTTGVLYKEDNYVIMTTAHKEKYKCILPLVTSGDEEEEKDYKGPNPRELLEPLFKQSSCSYRIESYWTYEVCHGKHIRQYHEEKETGQKINIHEYYLGNMLAKNLLFEKEREAEEKEKSNEIPTKNIEGQMTPYYPVGMGNGTPCSLKQNRPRSSTVMYICHPESKHEILSVAEVTTCEYEVVILTPLLCSHPKYRFRASPVNDIFCQSLPGSPFKPLTLRQLEQQEEILRVPFRRNKEEDLQSTKEERFPAIHKSIAIGSQPVLTVGTTHISKLTDDQLIKEFLSGSYCFRGGVGWWKYEFCYGKHVHQYHEDKDSGKTSVVVGTWNQEEHIEWAKKNTARAYHLQDDGTQTVRMVSHFYGNGDICDITDKPRQVTVKLKCKESDSPHAVTVYMLEPHSCQYILGVESPVICKILDTADENGLLSLPN.

Positions M1–A33 are cleaved as a signal peptide. 2 MRH domains span residues S111–H246 and S342–I469. C113 and C126 are oxidised to a cystine. The N-linked (GlcNAc...) asparagine glycan is linked to N195. Cystine bridges form between C199–C232, C215–C244, C344–C357, C421–C455, and C436–C467.

May form a complex with OS9, HSPA5, SYVN1, and SEL1L with which it interacts directly. Interacts (via PRKCSH 2 domain) with KREMEN2 (when glycosylated). Interacts with HSPA5. Isoform 1 and isoform 2 are N-glycosylated.

Its subcellular location is the endoplasmic reticulum lumen. Its function is as follows. Probable lectin that binds selectively to improperly folded lumenal proteins. May function in endoplasmic reticulum quality control and endoplasmic reticulum-associated degradation (ERAD) of both non-glycosylated proteins and glycoproteins. The protein is Endoplasmic reticulum lectin 1 (ERLEC1) of Homo sapiens (Human).